Reading from the N-terminus, the 444-residue chain is Phosphoglucosamine mutase (444 aa).

Ser102 functions as the Phosphoserine intermediate in the catalytic mechanism. Ser102, Asp241, Asp243, and Asp245 together coordinate Mg(2+). Residue Ser102 is modified to Phosphoserine.

Belongs to the phosphohexose mutase family. The cofactor is Mg(2+). Activated by phosphorylation.

It carries out the reaction alpha-D-glucosamine 1-phosphate = D-glucosamine 6-phosphate. In terms of biological role, catalyzes the conversion of glucosamine-6-phosphate to glucosamine-1-phosphate. The polypeptide is Phosphoglucosamine mutase (Acidovorax sp. (strain JS42)).